Here is a 1533-residue protein sequence, read N- to C-terminus: Protein TALPID3 (1533 aa).

The tract at residues 32–57 (LSANKRLPVGTGTSLNGTSRGSSDLT) is disordered. The span at 42–57 (TGTSLNGTSRGSSDLT) shows a compositional bias: polar residues. A coiled-coil region spans residues 182 to 223 (QSDLEAKVNSVTELLSKLQETDKHLQRVTEQQTSIQRKQEKL). Residues 309–321 (KEVEDTSFDKQKS) show a composition bias toward basic and acidic residues. Disordered stretches follow at residues 309–339 (KEVE…VSRD) and 377–400 (LTRK…TPEK). Serine 406 is subject to Phosphoserine. Positions 467–501 (SVLKDAEKILRGVQNNKKVLEENLEAIIRAKDGAA) form a coiled coil. The interval 467–554 (SVLKDAEKIL…YEQKRFDQKN (88 aa)) is required for centrosomal localization. Positions 546–575 (EQKRFDQKNQRTKKGQNMTKDIRTNTQDKT) are disordered. Polar residues predominate over residues 560–575 (GQNMTKDIRTNTQDKT). 2 positions are modified to phosphothreonine: threonine 1042 and threonine 1046. Serine 1050 is modified (phosphoserine). Residue threonine 1063 is modified to Phosphothreonine. Serine 1066 is subject to Phosphoserine. Residues 1129 to 1156 (SSPELPKPWGDGDLPLEEENPNSPQEEL) form a disordered region.

The protein belongs to the TALPID3 family. In terms of assembly, interacts with CCP110, CEP290, CEP97, KIF24. In terms of tissue distribution, ubiquitously expressed. Expressed in photoreceptor cells (at protein level).

Its subcellular location is the cytoplasm. It is found in the cytoskeleton. The protein localises to the microtubule organizing center. The protein resides in the centrosome. It localises to the photoreceptor inner segment. Its subcellular location is the centriole. It is found in the cilium basal body. Functionally, required for ciliogenesis and sonic hedgehog/SHH signaling. Required for the centrosomal recruitment of RAB8A and for the targeting of centriole satellite proteins to centrosomes such as of PCM1. May play a role in early ciliogenesis in the disappearance of centriolar satellites that preceeds ciliary vesicle formation. Involved in regulation of cell intracellular organization. Involved in regulation of cell polarity. Required for asymmetrical localization of CEP120 to daughter centrioles. This chain is Protein TALPID3 (KIAA0586), found in Homo sapiens (Human).